Here is a 199-residue protein sequence, read N- to C-terminus: N-(5'-phosphoribosyl)anthranilate isomerase (199 aa).

It belongs to the TrpF family.

The enzyme catalyses N-(5-phospho-beta-D-ribosyl)anthranilate = 1-(2-carboxyphenylamino)-1-deoxy-D-ribulose 5-phosphate. It functions in the pathway amino-acid biosynthesis; L-tryptophan biosynthesis; L-tryptophan from chorismate: step 3/5. This is N-(5'-phosphoribosyl)anthranilate isomerase from Streptococcus pneumoniae (strain ATCC 700669 / Spain 23F-1).